The primary structure comprises 1145 residues: Structure-specific endonuclease subunit SLX4 (1145 aa).

The segment at 48 to 108 (ADIPVQPDPP…GKSKQQPSIS (61 aa)) is disordered. Residues 321 to 372 (ERETQKCRQLRQQHELVYAELERYYGDPQKLEEEVMQELDELEKLVADNMIE) are a coiled coil. Residues 382–393 (EAESSSTGSSPS) are compositionally biased toward low complexity. Disordered regions lie at residues 382–442 (EAES…EDEP), 613–634 (QSSHQLGILTTPNDTEHSSSFS), and 666–689 (SAEKRVSPAASPYKQSDASVDLTQ). A compositionally biased stretch (basic and acidic residues) spans 395-410 (EPPDKRPKMTMEDKEN). Polar residues-rich tracts occupy residues 411–430 (LQPTTSKASLTVPAQSTRCT), 613–633 (QSSHQLGILTTPNDTEHSSSF), and 678–689 (YKQSDASVDLTQ).

It belongs to the SLX4 family. As to quaternary structure, forms a heterodimer with SLX1. Interacts with mei-9; catalytic subunit of the MEI-9-ERCC1 endonuclease.

The protein localises to the nucleus. Functionally, regulatory subunit that interacts with and increases the activity of different structure-specific endonucleases. Has several distinct roles in protecting genome stability by resolving diverse forms of deleterious DNA structures originating from replication and recombination intermediates and from DNA damage. Component of the SLX1-SLX4 structure-specific endonuclease that resolves DNA secondary structures generated during DNA repair and recombination. Has endonuclease activity towards branched DNA substrates, introducing single-strand cuts in duplex DNA close to junctions with ss-DNA. Interacts with the structure-specific MEI-9-ERCC1 endonuclease to generate meiotic crossovers. The chain is Structure-specific endonuclease subunit SLX4 (mus312) from Drosophila melanogaster (Fruit fly).